The primary structure comprises 158 residues: Cytochrome c-type biogenesis protein CcmE (158 aa).

The Cytoplasmic portion of the chain corresponds to 1-23 (MNSQSFKNFPSLKFISKKRRKER). A helical; Signal-anchor for type II membrane protein transmembrane segment spans residues 24–44 (LLMVLLCLFIMAITTGLIVYA). The Periplasmic segment spans residues 45–158 (MRNTANFFRT…DRLKKHHDIK (114 aa)). Heme-binding residues include His138 and Tyr142.

The protein belongs to the CcmE/CycJ family.

It is found in the cell inner membrane. Heme chaperone required for the biogenesis of c-type cytochromes. Transiently binds heme delivered by CcmC and transfers the heme to apo-cytochromes in a process facilitated by CcmF and CcmH. The protein is Cytochrome c-type biogenesis protein CcmE of Bartonella bacilliformis (strain ATCC 35685 / KC583 / Herrer 020/F12,63).